The chain runs to 115 residues: Large ribosomal subunit protein bL19 (115 aa).

This sequence belongs to the bacterial ribosomal protein bL19 family.

This protein is located at the 30S-50S ribosomal subunit interface and may play a role in the structure and function of the aminoacyl-tRNA binding site. This is Large ribosomal subunit protein bL19 from Wigglesworthia glossinidia brevipalpis.